The chain runs to 485 residues: Podocalyxin (485 aa).

Positions 1-24 (MRPTLALSALLLLQLLLLSTPSLS) are cleaved as a signal peptide. The interval 22-267 (SLSQDNGNKT…STPSSTWTSG (246 aa)) is disordered. Over 25 to 386 (QDNGNKTDTS…PPEVNEDRFS (362 aa)) the chain is Extracellular. Over residues 26 to 57 (DNGNKTDTSDITSIDQNQDKPATNQPSNATPK) the composition is skewed to polar residues. Asn29 and Asn82 each carry an N-linked (GlcNAc...) asparagine glycan. Over residues 58-109 (SSVQPPTPTSISTSSPDPKATQSSNSSVTTTSDSTTDRTSSSTSTVPTTSNS) the composition is skewed to low complexity. Composition is skewed to polar residues over residues 110-128 (GQTV…TALP) and 135-149 (NASS…STKL). N-linked (GlcNAc...) asparagine glycosylation is found at Asn135, Asn144, and Asn156. A compositionally biased stretch (low complexity) spans 150 to 161 (PSTPTTNSTASP). Composition is skewed to polar residues over residues 163–176 (QPVS…TTVQ), 186–228 (DNTT…QPTG), and 235–253 (SVPT…TPVV). Asn187 carries N-linked (GlcNAc...) asparagine glycosylation. Over residues 254–267 (SQGPSTPSSTWTSG) the composition is skewed to low complexity. N-linked (GlcNAc...) asparagine glycosylation is present at Asn287. The chain crosses the membrane as a helical span at residues 387–407 (LPLIITIVCMASFLLLVAALY). At 408 to 485 (GCCHQRISQR…DLDEEEDTHL (78 aa)) the chain is on the cytoplasmic side. Thr445 bears the Phosphothreonine mark. Ser464 is subject to Phosphoserine. Thr483 is subject to Phosphothreonine.

The protein belongs to the podocalyxin family. In terms of assembly, monomer; when associated with the membrane raft. Oligomer; when integrated in the apical membrane. Interacts with NHERF2. Interacts (via the C-terminal PDZ-binding motif DTHL) with NHERF1 (via the PDZ domains); the interaction take place early in the secretory pathway and is necessary for its apical membrane sorting. Found in a complex with EZR, PODXL and NHERF2. Associates with the actin cytoskeleton through complex formation with EZR and NHERF2. Interacts (via the C-terminal PDZ-binding motif DTHL) with NHERF1 (via the PDZ domains); interaction is not detected in glomerular epithelium cells. Interacts (via the C-terminal PDZ-binding motif DTHL) with NHERF2 (via the PDZ 1 domain); interaction is detected in glomerular epithelium cells. Interacts with EZR. Post-translationally, N- and O-linked glycosylated. Sialoglycoprotein. As to expression, glomerular epithelium cell (podocyte) (at protein level).

The protein resides in the apical cell membrane. It is found in the cell projection. The protein localises to the microvillus. Its subcellular location is the membrane raft. It localises to the lamellipodium. The protein resides in the filopodium. It is found in the ruffle. The protein localises to the membrane. Functionally, involved in the regulation of both adhesion and cell morphology and cancer progression. Functions as an anti-adhesive molecule that maintains an open filtration pathway between neighboring foot processes in the podocyte by charge repulsion. Acts as a pro-adhesive molecule, enhancing the adherence of cells to immobilized ligands, increasing the rate of migration and cell-cell contacts in an integrin-dependent manner. Induces the formation of apical actin-dependent microvilli. Involved in the formation of a preapical plasma membrane subdomain to set up initial epithelial polarization and the apical lumen formation during renal tubulogenesis. Plays a role in cancer development and aggressiveness by inducing cell migration and invasion through its interaction with the actin-binding protein EZR. Affects EZR-dependent signaling events, leading to increased activities of the MAPK and PI3K pathways in cancer cells. The chain is Podocalyxin (Podxl) from Rattus norvegicus (Rat).